A 467-amino-acid chain; its full sequence is Putative gluconeogenesis factor (467 aa).

A compositionally biased stretch (pro residues) spans 1-12 (MSAPPAPPPDRS). Residues 1–27 (MSAPPAPPPDRSAPPDRTDSAQTEPTR) are disordered.

It belongs to the gluconeogenesis factor family.

Its subcellular location is the cytoplasm. Functionally, required for morphogenesis under gluconeogenic growth conditions. This is Putative gluconeogenesis factor from Deinococcus radiodurans (strain ATCC 13939 / DSM 20539 / JCM 16871 / CCUG 27074 / LMG 4051 / NBRC 15346 / NCIMB 9279 / VKM B-1422 / R1).